Consider the following 401-residue polypeptide: UDP-N-acetylglucosamine--N-acetylmuramyl-(pentapeptide) pyrophosphoryl-undecaprenol N-acetylglucosamine transferase (401 aa).

The segment at 1–24 (MTRISVPAGQERNDGGISVPAGQE) is disordered. Residues 39–41 (TAG), Asn157, Arg194, Ser228, and Gln324 contribute to the UDP-N-acetyl-alpha-D-glucosamine site.

The protein belongs to the glycosyltransferase 28 family. MurG subfamily.

It is found in the cell membrane. It carries out the reaction di-trans,octa-cis-undecaprenyl diphospho-N-acetyl-alpha-D-muramoyl-L-alanyl-D-glutamyl-meso-2,6-diaminopimeloyl-D-alanyl-D-alanine + UDP-N-acetyl-alpha-D-glucosamine = di-trans,octa-cis-undecaprenyl diphospho-[N-acetyl-alpha-D-glucosaminyl-(1-&gt;4)]-N-acetyl-alpha-D-muramoyl-L-alanyl-D-glutamyl-meso-2,6-diaminopimeloyl-D-alanyl-D-alanine + UDP + H(+). Its pathway is cell wall biogenesis; peptidoglycan biosynthesis. Its function is as follows. Cell wall formation. Catalyzes the transfer of a GlcNAc subunit on undecaprenyl-pyrophosphoryl-MurNAc-pentapeptide (lipid intermediate I) to form undecaprenyl-pyrophosphoryl-MurNAc-(pentapeptide)GlcNAc (lipid intermediate II). The polypeptide is UDP-N-acetylglucosamine--N-acetylmuramyl-(pentapeptide) pyrophosphoryl-undecaprenol N-acetylglucosamine transferase (Mycolicibacterium vanbaalenii (strain DSM 7251 / JCM 13017 / BCRC 16820 / KCTC 9966 / NRRL B-24157 / PYR-1) (Mycobacterium vanbaalenii)).